The primary structure comprises 309 residues: L-lactate dehydrogenase (309 aa).

NAD(+) is bound by residues valine 12, aspartate 33, arginine 38, tyrosine 63, and 77 to 78 (GA). Substrate-binding positions include glutamine 80, arginine 86, and 118–121 (NPVD). NAD(+)-binding positions include 116–118 (ATN) and serine 141. 146 to 149 (DSAR) contacts substrate. Beta-D-fructose 1,6-bisphosphate is bound by residues arginine 151 and histidine 166. Histidine 173 (proton acceptor) is an active-site residue. The residue at position 219 (tyrosine 219) is a Phosphotyrosine. Threonine 228 contacts substrate.

This sequence belongs to the LDH/MDH superfamily. LDH family. As to quaternary structure, homotetramer.

It localises to the cytoplasm. The catalysed reaction is (S)-lactate + NAD(+) = pyruvate + NADH + H(+). It participates in fermentation; pyruvate fermentation to lactate; (S)-lactate from pyruvate: step 1/1. Allosterically activated by fructose 1,6-bisphosphate (FBP). Its function is as follows. Catalyzes the conversion of lactate to pyruvate. In Nitratidesulfovibrio vulgaris (strain ATCC 29579 / DSM 644 / CCUG 34227 / NCIMB 8303 / VKM B-1760 / Hildenborough) (Desulfovibrio vulgaris), this protein is L-lactate dehydrogenase.